The chain runs to 442 residues: D-serine dehydratase 2 (442 aa).

Lysine 118 carries the post-translational modification N6-(pyridoxal phosphate)lysine.

This sequence belongs to the serine/threonine dehydratase family. DsdA subfamily. Monomer. It depends on pyridoxal 5'-phosphate as a cofactor.

The enzyme catalyses D-serine = pyruvate + NH4(+). In Escherichia coli O6:K15:H31 (strain 536 / UPEC), this protein is D-serine dehydratase 2.